Reading from the N-terminus, the 500-residue chain is Cytochrome P450 71B35 (500 aa).

Residues 1–21 traverse the membrane as a helical segment; that stretch reads MAHIWLLPLIFLVCILLAVFN. Cys439 lines the heme pocket.

Belongs to the cytochrome P450 family. The cofactor is heme.

The protein resides in the membrane. The protein is Cytochrome P450 71B35 (CYP71B35) of Arabidopsis thaliana (Mouse-ear cress).